The primary structure comprises 240 residues: MAALRRMLHLPSLMMGTCRPFAGSLADSCLADRCLWDRLHAQPRLGTVPTFDWFFGYDEVQGLLLPLLQEAQAASPLRVLDVGCGTSSLCTGLYTKSPHPVDVLGVDFSPVAVAHMNSLLEGGPGQTPLCPGHPASSLHFMHADAQNLGAVASSGSFQLLLDKGTWDAVARGGLPRAYQLLSECLRVLNPQGTLIQFSDEDPDVRLPCLEQGSYGWTVTVQELGPFRGITYFAYLIQGSH.

Residues 1-28 constitute a mitochondrion transit peptide; sequence MAALRRMLHLPSLMMGTCRPFAGSLADS.

It belongs to the methyltransferase superfamily.

Its subcellular location is the mitochondrion. It carries out the reaction L-lysyl-[citrate synthase] + S-adenosyl-L-methionine = N(6)-methyl-L-lysyl-[citrate synthase] + S-adenosyl-L-homocysteine + H(+). The catalysed reaction is N(6)-methyl-L-lysyl-[citrate synthase] + S-adenosyl-L-methionine = N(6),N(6)-dimethyl-L-lysyl-[citrate synthase] + S-adenosyl-L-homocysteine + H(+). The enzyme catalyses N(6),N(6)-dimethyl-L-lysyl-[citrate synthase] + S-adenosyl-L-methionine = N(6),N(6),N(6)-trimethyl-L-lysyl-[citrate synthase] + S-adenosyl-L-homocysteine + H(+). Its activity is regulated as follows. Citrate synthase-lysine methyltransferase activity is inhibited by S-adenosylhomocysteine (AdoHcy) and oxaloacetate (OAA). Its function is as follows. Protein-lysine methyltransferase that selectively trimethylates citrate synthase (CS) in mitochondria. Seems to conduct trimethylation in a highly distributive manner rather than in a processive manner, and thus introduces a single methyl group per binding event. The polypeptide is Citrate synthase-lysine N-methyltransferase CSKMT, mitochondrial (Homo sapiens (Human)).